The following is a 356-amino-acid chain: 5-amino-6-(D-ribitylamino)uracil--L-tyrosine 4-hydroxyphenyl transferase (356 aa).

Residues 47 to 281 (VTYIVNRNIN…AIARILLNTH (235 aa)) form the Radical SAM core domain. [4Fe-4S] cluster is bound by residues Cys61, Cys65, and Cys68.

This sequence belongs to the radical SAM superfamily. CofH family. As to quaternary structure, consists of two subunits, CofG and CofH. [4Fe-4S] cluster serves as cofactor.

The enzyme catalyses 5-amino-6-(D-ribitylamino)uracil + L-tyrosine + S-adenosyl-L-methionine = 5-amino-5-(4-hydroxybenzyl)-6-(D-ribitylimino)-5,6-dihydrouracil + 2-iminoacetate + 5'-deoxyadenosine + L-methionine + H(+). It functions in the pathway cofactor biosynthesis; coenzyme F0 biosynthesis. In terms of biological role, catalyzes the radical-mediated synthesis of 5-amino-5-(4-hydroxybenzyl)-6-(D-ribitylimino)-5,6-dihydrouracil from 5-amino-6-(D-ribitylamino)uracil and L-tyrosine. The chain is 5-amino-6-(D-ribitylamino)uracil--L-tyrosine 4-hydroxyphenyl transferase from Methanococcoides burtonii (strain DSM 6242 / NBRC 107633 / OCM 468 / ACE-M).